We begin with the raw amino-acid sequence, 105 residues long: Protamine-2 (105 aa).

A disordered region spans residues 1-74 (MVRYRMRSPS…RRSCRRRRRH (74 aa)). Residues Ser8, Ser10, and Ser33 each carry the phosphoserine modification. A compositionally biased stretch (basic and acidic residues) spans 33–42 (SPERVEDYGR). A compositionally biased stretch (basic residues) spans 43–74 (THRGHHRHRRCSRKRLHRIHKRRRSCRRRRRH).

The protein belongs to the protamine P2 family. As to quaternary structure, interacts with TDRP. Proteolytic processing into mature chains is required for histone eviction during spermatogenesis. Transition proteins (TNP1 and TNP2) are required for processing. Testis.

Its subcellular location is the nucleus. The protein localises to the chromosome. In terms of biological role, protamines substitute for histones in the chromatin of sperm during the haploid phase of spermatogenesis. They compact sperm DNA into a highly condensed, stable and inactive complex. In Rattus fuscipes (Bush rat), this protein is Protamine-2 (Prm2).